The primary structure comprises 367 residues: Leucine-rich repeat-containing protein 28 (367 aa).

LRR repeat units lie at residues 16–36 (KHKN…ELLK), 42–63 (YLER…LAQK), 66–87 (NLVE…IGSL), 89–111 (KLQS…GRLK), 112–133 (SLRH…IGKL), 135–156 (ELQT…LYQC), 158–179 (SLQY…LCQL), 181–202 (SLNE…LGRS), and 204–226 (ELQY…LYNK).

This is Leucine-rich repeat-containing protein 28 (lrrc28) from Xenopus tropicalis (Western clawed frog).